The following is a 249-amino-acid chain: Metallo-beta-lactamase type 2 (249 aa).

Residues 1 to 22 form the signal peptide; sequence MLKKIKISLILALGLTSLQAFG. Zn(2+) contacts are provided by histidine 98, histidine 100, aspartate 102, histidine 161, and cysteine 180. Lysine 183 is a substrate binding site. Residue histidine 222 participates in Zn(2+) binding.

The protein belongs to the metallo-beta-lactamase superfamily. Class-B beta-lactamase family. As to quaternary structure, monomer. Zn(2+) serves as cofactor.

Its subcellular location is the periplasm. The catalysed reaction is a beta-lactam + H2O = a substituted beta-amino acid. Its function is as follows. Confers resistance to the different beta-lactams antibiotics (penicillin, cephalosporin and carbapenem) via the hydrolysis of the beta-lactam ring. The polypeptide is Metallo-beta-lactamase type 2 (blaB3) (Elizabethkingia meningoseptica (Chryseobacterium meningosepticum)).